Consider the following 464-residue polypeptide: NADH-quinone oxidoreductase subunit N (464 aa).

Helical transmembrane passes span 6–26 (FLYI…LVLG), 36–56 (SMSL…LIYF), 75–95 (CLAR…FFFA), 101–121 (YEFA…VEAH), 123–143 (FLSF…LVCF), 157–177 (FFVL…LVYG), 197–217 (LGAT…LGAV), 231–253 (PTVA…FAGL), 257–279 (VVIP…MVVG), 293–313 (FAYA…TGVV), 317–337 (PVLF…TVLL), 360–380 (AFTF…SGFF), 395–415 (FGVP…IPCF), and 439–459 (NVGL…VVLL).

The protein belongs to the complex I subunit 2 family. As to quaternary structure, NDH-1 is composed of 14 different subunits. Subunits NuoA, H, J, K, L, M, N constitute the membrane sector of the complex.

The protein localises to the cell inner membrane. It catalyses the reaction a quinone + NADH + 5 H(+)(in) = a quinol + NAD(+) + 4 H(+)(out). Its function is as follows. NDH-1 shuttles electrons from NADH, via FMN and iron-sulfur (Fe-S) centers, to quinones in the respiratory chain. The immediate electron acceptor for the enzyme in this species is believed to be ubiquinone. Couples the redox reaction to proton translocation (for every two electrons transferred, four hydrogen ions are translocated across the cytoplasmic membrane), and thus conserves the redox energy in a proton gradient. This is NADH-quinone oxidoreductase subunit N from Anaplasma phagocytophilum (strain HZ).